We begin with the raw amino-acid sequence, 660 residues long: Acetyl-coenzyme A synthetase (660 aa).

CoA contacts are provided by residues 197 to 200 (RGGK) and threonine 317. Residues 397–399 (GEP), 421–426 (DTWWQT), aspartate 512, and arginine 528 each bind ATP. Serine 536 contributes to the CoA binding site. Arginine 539 lines the ATP pocket. Mg(2+)-binding residues include valine 550 and valine 555. Lysine 625 carries the N6-acetyllysine modification.

This sequence belongs to the ATP-dependent AMP-binding enzyme family. Requires Mg(2+) as cofactor. Acetylated. Deacetylation by the SIR2-homolog deacetylase activates the enzyme.

The catalysed reaction is acetate + ATP + CoA = acetyl-CoA + AMP + diphosphate. Catalyzes the conversion of acetate into acetyl-CoA (AcCoA), an essential intermediate at the junction of anabolic and catabolic pathways. AcsA undergoes a two-step reaction. In the first half reaction, AcsA combines acetate with ATP to form acetyl-adenylate (AcAMP) intermediate. In the second half reaction, it can then transfer the acetyl group from AcAMP to the sulfhydryl group of CoA, forming the product AcCoA. The sequence is that of Acetyl-coenzyme A synthetase from Paraburkholderia phymatum (strain DSM 17167 / CIP 108236 / LMG 21445 / STM815) (Burkholderia phymatum).